A 270-amino-acid chain; its full sequence is uncharacterized protein (270 aa).

The J domain occupies 43 to 112 (CTANDIKRKY…REEYDRFGIH (70 aa)). The segment at 239 to 270 (EQSKQIPTQQKPSSLPPPERALPAPTMPTPSS) is disordered. A compositionally biased stretch (polar residues) spans 242–251 (KQIPTQQKPS). Residues 252–270 (SLPPPERALPAPTMPTPSS) show a composition bias toward pro residues.

This is an uncharacterized protein from Schizosaccharomyces pombe (strain 972 / ATCC 24843) (Fission yeast).